Reading from the N-terminus, the 248-residue chain is Tryptophan synthase alpha chain (248 aa).

Catalysis depends on proton acceptor residues E36 and D47.

Belongs to the TrpA family. As to quaternary structure, tetramer of two alpha and two beta chains.

It catalyses the reaction (1S,2R)-1-C-(indol-3-yl)glycerol 3-phosphate + L-serine = D-glyceraldehyde 3-phosphate + L-tryptophan + H2O. Its pathway is amino-acid biosynthesis; L-tryptophan biosynthesis; L-tryptophan from chorismate: step 5/5. The alpha subunit is responsible for the aldol cleavage of indoleglycerol phosphate to indole and glyceraldehyde 3-phosphate. The polypeptide is Tryptophan synthase alpha chain (Pyrococcus furiosus (strain ATCC 43587 / DSM 3638 / JCM 8422 / Vc1)).